A 583-amino-acid chain; its full sequence is Probable cysteine--tRNA ligase, mitochondrial (583 aa).

Cys-82 contacts Zn(2+). Gly-83 contacts L-cysteine. The short motif at 84–94 is the 'HIGH' region element; it reads PTVYSSSHIGH. Thr-123 is a binding site for L-cysteine. Residues 128–131 carry the 'KIIK' region motif; sequence KIIN. 3 residues coordinate Zn(2+): Cys-271, His-296, and Glu-300. His-296 provides a ligand contact to L-cysteine. Positions 337–341 match the 'KMSKS' region motif; sequence KMSKS. Position 340 (Lys-340) interacts with ATP.

It belongs to the class-I aminoacyl-tRNA synthetase family. Zn(2+) serves as cofactor.

The protein localises to the mitochondrion. The enzyme catalyses tRNA(Cys) + L-cysteine + ATP = L-cysteinyl-tRNA(Cys) + AMP + diphosphate. Its function is as follows. Mitochondrial cysteine-specific aminoacyl-tRNA synthetase that catalyzes the ATP-dependent ligation of cysteine to tRNA(Cys). Functionally, in addition to its role as an aminoacyl-tRNA synthetase, has also cysteine persulfide synthase activity. Produces reactive persulfide species such as cysteine persulfide (CysSSH) from substrate cysteine and mediate direct incorporation of CysSSH into proteins during translations, resulting in protein persulfides and polysulfides. CysSSHs behave as potent antioxidants and cellular protectants. The protein is Probable cysteine--tRNA ligase, mitochondrial (mcysS) of Dictyostelium discoideum (Social amoeba).